We begin with the raw amino-acid sequence, 84 residues long: MTSSPSTVSTTLLSILRDDLNIDLTRVTPDARLVDDVGLDSVAFAVGMVAIEERLGVALSEEELLTCDTVGELEAAIAAKYRDE.

Residues 6 to 81 (STVSTTLLSI…ELEAAIAAKY (76 aa)) enclose the Carrier domain. Serine 41 bears the O-(pantetheine 4'-phosphoryl)serine mark.

4'-phosphopantetheine is transferred from CoA to a specific serine of apo-ACP, leading to the activated holo-ACP form.

The protein resides in the cytoplasm. It functions in the pathway siderophore biosynthesis; mycobactin biosynthesis. Its function is as follows. Acyl carrier protein involved in the formation of acyl-S-ACP intermediates within the mycobactin biosynthesis process. The aliphatic chains carried by ACP are subsequently transferred on to the mycobactin core by MbtK. The sequence is that of Acyl carrier protein MbtL (mbtL) from Mycobacterium bovis (strain ATCC BAA-935 / AF2122/97).